We begin with the raw amino-acid sequence, 315 residues long: MTPTVKCPVAILGSGDVGTDLMMKILRSDGPLTVGALVGLDPEPGGLARAERLGVPTSAAGIDGLPAMPEFGDIGIVFDATPAGAPRAELEKAGVCVLDLNPAVVGPHCVPAVNLEDHLDTPNLNLVTGAGQATVPIVAAVGRVGAVSYAETVTSVAAKSADPATRANIDESIETTTAALRTVGGARRARSIFIINPADPPILMRNTVYCLVDGDVPRGDIEQSIAAMVERVTSYVPGYRLKQRVQFETFTATDPLHIPETGGFTGTRVTVLVEVTAGEPHLPGYAGNLEMMTSAAKAAAERIALHRSRTAGAAT.

NAD(+) contacts are provided by residues 14 to 17 (SGDV) and N288.

It belongs to the acetaldehyde dehydrogenase family.

The protein is Probable inactive acetaldehyde dehydrogenase 1 of Mycolicibacterium vanbaalenii (strain DSM 7251 / JCM 13017 / BCRC 16820 / KCTC 9966 / NRRL B-24157 / PYR-1) (Mycobacterium vanbaalenii).